We begin with the raw amino-acid sequence, 116 residues long: Protein SPIRAL1-like 1 (116 aa).

Gly residues predominate over residues 1–12; the sequence is MSRGGSAGGGQS. Positions 1–116 are disordered; that stretch reads MSRGGSAGGG…SSLGYLFGGN (116 aa). Positions 27 to 43 are enriched in pro residues; that stretch reads AAKPAPAAAPAPAPAPA. A compositionally biased stretch (low complexity) spans 44–60; that stretch reads PAAAVAAPAEKPSPAKA. The span at 72–90 shows a compositional bias: polar residues; that stretch reads GSRSNNNYHRADGQNTGNF. The span at 103–116 shows a compositional bias: gly residues; that stretch reads PGGGSSLGYLFGGN.

The protein belongs to the SPIRAL1 family.

In terms of biological role, acts in maintaining the cortical microtubules organization essential for anisotropic cell growth. The chain is Protein SPIRAL1-like 1 from Oryza sativa subsp. japonica (Rice).